A 261-amino-acid polypeptide reads, in one-letter code: HTH-type transcriptional repressor CsqR (261 aa).

One can recognise an HTH deoR-type domain in the interval 8–63 (GNPRHDQLLMLIAERGYMNIDELANLLDVSTQTVRRDIRKLSEQGLITRHHGGAGR). Positions 25 to 44 (MNIDELANLLDVSTQTVRRD) form a DNA-binding region, H-T-H motif.

In terms of assembly, monomer in the absence of DNA. Exhibits a high level of cooperativity once it is bound to its target DNA.

With respect to regulation, inactivated in the presence of the effectors sulfoquinovose and sulfoquinovosyl glycerol, leading to the de-repression of the target genes. Its function is as follows. Involved in the regulation of the sulfoquinovose operon. Represses the expression of the yihUTS operon and of the yihV and csqR genes. Binds DNA inside the spacer between the bidirectional transcription units comprising the yihUTS operon and the yihV gene, and upstream the csqR gene itself. The chain is HTH-type transcriptional repressor CsqR from Escherichia coli (strain K12).